The following is a 792-amino-acid chain: Phenylalanine--tRNA ligase beta subunit (792 aa).

Positions 40-156 (FPRTENLIVG…AKLNDIDPLK (117 aa)) constitute a tRNA-binding domain. Positions 404–472 (LKDNLIDFDS…KKINVNNLEL (69 aa)) constitute a B5 domain. The Mg(2+) site is built by aspartate 450, aspartate 456, glutamate 459, and glutamate 460.

Belongs to the phenylalanyl-tRNA synthetase beta subunit family. Type 1 subfamily. As to quaternary structure, tetramer of two alpha and two beta subunits. Mg(2+) is required as a cofactor.

It localises to the cytoplasm. The enzyme catalyses tRNA(Phe) + L-phenylalanine + ATP = L-phenylalanyl-tRNA(Phe) + AMP + diphosphate + H(+). The chain is Phenylalanine--tRNA ligase beta subunit from Malacoplasma penetrans (strain HF-2) (Mycoplasma penetrans).